A 101-amino-acid chain; its full sequence is MDKPKRLFLKSKRSFRRRLPPIGSGDRIDYRNMSLISRFISEQGKILSRRVNRLTLKQQRLITIAIKQARILSSLPFLNNEKQFERAESTPRTPGPRTRNK.

The disordered stretch occupies residues 82–101 (KQFERAESTPRTPGPRTRNK).

This sequence belongs to the bacterial ribosomal protein bS18 family. In terms of assembly, part of the 30S ribosomal subunit.

The protein localises to the plastid. It is found in the chloroplast. In Platanus occidentalis (Sycamore), this protein is Small ribosomal subunit protein bS18c.